Consider the following 293-residue polypeptide: Protease HtpX (293 aa).

Helical transmembrane passes span 4–24 (IALF…VLSL) and 34–54 (GLMI…LLMS). His-139 contributes to the Zn(2+) binding site. Residue Glu-140 is part of the active site. His-143 is a Zn(2+) binding site. Transmembrane regions (helical) follow at residues 158-178 (VVNT…AGFL) and 193-213 (MVYF…ASII). Zn(2+) is bound at residue Glu-222.

Belongs to the peptidase M48B family. Requires Zn(2+) as cofactor.

It localises to the cell inner membrane. The sequence is that of Protease HtpX from Yersinia pseudotuberculosis serotype O:1b (strain IP 31758).